Reading from the N-terminus, the 94-residue chain is uncharacterized protein (94 aa).

The segment at 1–22 is disordered; sequence MATLQQAQQQNNQLTQQNNQLT. A coiled-coil region spans residues 1-77; the sequence is MATLQQAQQQ…NRLHSENHRL (77 aa).

This is an uncharacterized protein from Acheta domesticus (House cricket).